Consider the following 344-residue polypeptide: Phosphoribosylformylglycinamidine cyclo-ligase (344 aa).

The protein belongs to the AIR synthase family.

Its subcellular location is the cytoplasm. The catalysed reaction is 2-formamido-N(1)-(5-O-phospho-beta-D-ribosyl)acetamidine + ATP = 5-amino-1-(5-phospho-beta-D-ribosyl)imidazole + ADP + phosphate + H(+). The protein operates within purine metabolism; IMP biosynthesis via de novo pathway; 5-amino-1-(5-phospho-D-ribosyl)imidazole from N(2)-formyl-N(1)-(5-phospho-D-ribosyl)glycinamide: step 2/2. In Neisseria meningitidis serogroup C / serotype 2a (strain ATCC 700532 / DSM 15464 / FAM18), this protein is Phosphoribosylformylglycinamidine cyclo-ligase.